Here is a 95-residue protein sequence, read N- to C-terminus: UPF0358 protein GK1077 (95 aa).

It belongs to the UPF0358 family.

The sequence is that of UPF0358 protein GK1077 from Geobacillus kaustophilus (strain HTA426).